Here is a 136-residue protein sequence, read N- to C-terminus: Large ribosomal subunit protein uL14 (136 aa).

This sequence belongs to the universal ribosomal protein uL14 family.

The protein is Large ribosomal subunit protein uL14 (rpl23) of Dictyostelium discoideum (Social amoeba).